The following is a 379-amino-acid chain: Cytochrome b (379 aa).

The next 4 membrane-spanning stretches (helical) occupy residues 33–53 (FGSL…FLAM), 77–98 (WLIR…FIHV), 113–133 (WNIG…GYVL), and 178–198 (FFAF…VHLL). Residues H83 and H97 each coordinate heme b. Residues H182 and H196 each contribute to the heme b site. H201 contributes to the a ubiquinone binding site. The next 4 helical transmembrane spans lie at 226–246 (TKDL…ALFF), 288–308 (LGGV…PLLN), 320–340 (VTQV…WIGG), and 347–367 (FTMI…ILMP).

It belongs to the cytochrome b family. The cytochrome bc1 complex contains 11 subunits: 3 respiratory subunits (MT-CYB, CYC1 and UQCRFS1), 2 core proteins (UQCRC1 and UQCRC2) and 6 low-molecular weight proteins (UQCRH/QCR6, UQCRB/QCR7, UQCRQ/QCR8, UQCR10/QCR9, UQCR11/QCR10 and a cleavage product of UQCRFS1). This cytochrome bc1 complex then forms a dimer. The cofactor is heme b.

The protein localises to the mitochondrion inner membrane. Its function is as follows. Component of the ubiquinol-cytochrome c reductase complex (complex III or cytochrome b-c1 complex) that is part of the mitochondrial respiratory chain. The b-c1 complex mediates electron transfer from ubiquinol to cytochrome c. Contributes to the generation of a proton gradient across the mitochondrial membrane that is then used for ATP synthesis. This is Cytochrome b (MT-CYB) from Akodon kofordi (Koford's grass mouse).